The primary structure comprises 70 residues: NADH-ubiquinone oxidoreductase chain 3 (70 aa).

A helical membrane pass occupies residues 42 to 62; that stretch reads FFVITLIFLIFDVEIYLLLPM.

Belongs to the complex I subunit 3 family.

It localises to the mitochondrion membrane. It carries out the reaction a ubiquinone + NADH + 5 H(+)(in) = a ubiquinol + NAD(+) + 4 H(+)(out). In terms of biological role, core subunit of the mitochondrial membrane respiratory chain NADH dehydrogenase (Complex I) that is believed to belong to the minimal assembly required for catalysis. Complex I functions in the transfer of electrons from NADH to the respiratory chain. The immediate electron acceptor for the enzyme is believed to be ubiquinone. The protein is NADH-ubiquinone oxidoreductase chain 3 (ND3) of Artemia salina (Brine shrimp).